The chain runs to 155 residues: MSEQNNNEMSFQIQRIYTKDVSFEAPNAPHVFQKDWQPEVKLDLDTASTQLADDVYEVVLRVTVTASLGEETAFLCEVQQGGIFSVGGIEGNQLAHCLGAYCPNILFPYARECITSLVSRGTFPQLNLAPVNFDALFMNYLQQQAGEGTEEHQDA.

This sequence belongs to the SecB family. In terms of assembly, homotetramer, a dimer of dimers. One homotetramer interacts with 1 SecA dimer.

The protein resides in the cytoplasm. Functionally, one of the proteins required for the normal export of preproteins out of the cell cytoplasm. It is a molecular chaperone that binds to a subset of precursor proteins, maintaining them in a translocation-competent state. It also specifically binds to its receptor SecA. This Enterobacter sp. (strain 638) protein is Protein-export protein SecB.